The sequence spans 483 residues: ATP-dependent RNA helicase DDX25 (483 aa).

Positions 97–125 (KSFEELHLKNELLRGIYAMGFNRPSKIQE) match the Q motif motif. In terms of domain architecture, Helicase ATP-binding spans 130–300 (MMLADPPQNL…ERIVPDPNII (171 aa)). 143–150 (SQSGTGKT) provides a ligand contact to ATP. The short motif at 247-250 (DEAD) is the DEAD box element. The 168-residue stretch at 311–478 (NIQQFYDQCE…KLNSMDMDEM (168 aa)) folds into the Helicase C-terminal domain.

The protein belongs to the DEAD box helicase family. As to expression, an mRNA component of germ plasm. Localizes to the granulo-fibrillar material (GFM) of the mitochondrial cloud in stage I oocytes. Associated, at a low level, with the periphery of mature germinal granules in later stage oocytes. Localizes to the vegetal cortex in stage II oocytes and segregates with germ plasm during early embryogenesis. In adults, expression is restricted to the ovary and, at a lower level, to spermatogonia, spermatocytes and spermatids of the testis.

The protein resides in the cytoplasm. Its subcellular location is the nucleus. The enzyme catalyses ATP + H2O = ADP + phosphate + H(+). Its function is as follows. ATP-dependent RNA helicase. This Xenopus laevis (African clawed frog) protein is ATP-dependent RNA helicase DDX25.